The sequence spans 338 residues: Holliday junction branch migration complex subunit RuvB (338 aa).

The large ATPase domain (RuvB-L) stretch occupies residues 4–184 (ADRLMSAAAV…FGIVQRLEFY (181 aa)). ATP contacts are provided by residues I23, R24, G65, K68, T69, T70, 131-133 (EDY), R174, Y184, and R221. T69 is a binding site for Mg(2+). The interval 185 to 255 (QTGDLQHIVS…VAVSALNMLN (71 aa)) is small ATPAse domain (RuvB-S). The interval 258-338 (TEGFDFMDRK…GLEEHGGDPE (81 aa)) is head domain (RuvB-H). DNA is bound by residues R294, R313, and R318.

Belongs to the RuvB family. Homohexamer. Forms an RuvA(8)-RuvB(12)-Holliday junction (HJ) complex. HJ DNA is sandwiched between 2 RuvA tetramers; dsDNA enters through RuvA and exits via RuvB. An RuvB hexamer assembles on each DNA strand where it exits the tetramer. Each RuvB hexamer is contacted by two RuvA subunits (via domain III) on 2 adjacent RuvB subunits; this complex drives branch migration. In the full resolvosome a probable DNA-RuvA(4)-RuvB(12)-RuvC(2) complex forms which resolves the HJ.

It is found in the cytoplasm. It carries out the reaction ATP + H2O = ADP + phosphate + H(+). Its function is as follows. The RuvA-RuvB-RuvC complex processes Holliday junction (HJ) DNA during genetic recombination and DNA repair, while the RuvA-RuvB complex plays an important role in the rescue of blocked DNA replication forks via replication fork reversal (RFR). RuvA specifically binds to HJ cruciform DNA, conferring on it an open structure. The RuvB hexamer acts as an ATP-dependent pump, pulling dsDNA into and through the RuvAB complex. RuvB forms 2 homohexamers on either side of HJ DNA bound by 1 or 2 RuvA tetramers; 4 subunits per hexamer contact DNA at a time. Coordinated motions by a converter formed by DNA-disengaged RuvB subunits stimulates ATP hydrolysis and nucleotide exchange. Immobilization of the converter enables RuvB to convert the ATP-contained energy into a lever motion, pulling 2 nucleotides of DNA out of the RuvA tetramer per ATP hydrolyzed, thus driving DNA branch migration. The RuvB motors rotate together with the DNA substrate, which together with the progressing nucleotide cycle form the mechanistic basis for DNA recombination by continuous HJ branch migration. Branch migration allows RuvC to scan DNA until it finds its consensus sequence, where it cleaves and resolves cruciform DNA. In Sodalis glossinidius (strain morsitans), this protein is Holliday junction branch migration complex subunit RuvB.